The following is a 215-amino-acid chain: MSKAIVLDSHLKEKGSMELPKRYEGINSHNLYLYVKHYLSSVRANTAKSKNRAEVSGGGRKPWAQKGGGRARAGSITSPVFVGGGVSHGATNNRNYNLKINKKQKRLALEYALEEKAQANKLFVVEKIAIKGVVEYNKRKHLAKEANKMFQALEQRDTLFVCMNMDEYTELAFSNLKKCLVIDVSELNAYLLAAFSSVVMEEVAFQHVVQDKTEE.

The tract at residues 46–76 (TAKSKNRAEVSGGGRKPWAQKGGGRARAGSI) is disordered. A compositionally biased stretch (gly residues) spans 56–71 (SGGGRKPWAQKGGGRA).

Belongs to the universal ribosomal protein uL4 family. As to quaternary structure, part of the 50S ribosomal subunit.

In terms of biological role, one of the primary rRNA binding proteins, this protein initially binds near the 5'-end of the 23S rRNA. It is important during the early stages of 50S assembly. It makes multiple contacts with different domains of the 23S rRNA in the assembled 50S subunit and ribosome. Forms part of the polypeptide exit tunnel. In Helicobacter acinonychis (strain Sheeba), this protein is Large ribosomal subunit protein uL4.